The primary structure comprises 318 residues: Galactofuranose-binding protein YtfQ (318 aa).

The first 21 residues, 1–21 (MWKRLLIVSAVSAAMSSMALA), serve as a signal peptide directing secretion. Beta-D-galactofuranose is bound by residues 34 to 38 (ESGWR), 111 to 112 (DR), arginine 167, asparagine 220, and aspartate 248. The cysteines at positions 150 and 214 are disulfide-linked.

This sequence belongs to the bacterial solute-binding protein 2 family. In terms of assembly, the complex is composed of two ATP-binding proteins (YtfR), two transmembrane proteins (YtfT and YjfF) and a solute-binding protein (YtfQ).

Its subcellular location is the periplasm. Functionally, part of the ABC transporter complex YtfQRT-YjfF involved in galactofuranose transport. Binds to both alpha- and beta-galactofuranose. This chain is Galactofuranose-binding protein YtfQ (ytfQ), found in Escherichia coli (strain K12).